A 111-amino-acid chain; its full sequence is Guanylate cyclase activator 2B (111 aa).

The first 26 residues, M1–S26, serve as a signal peptide directing secretion. Positions V27–D96 are excised as a propeptide. 3 disulfides stabilise this stretch: C67/C80, C100/C108, and C103/C111.

Belongs to the guanylin family.

The protein resides in the secreted. Its function is as follows. Endogenous activator of intestinal guanylate cyclase. It stimulates this enzyme through the same receptor binding region as the heat-stable enterotoxins. May be a potent physiological regulator of intestinal fluid and electrolyte transport. May be an autocrine/paracrine regulator of intestinal salt and water transport. The sequence is that of Guanylate cyclase activator 2B (GUCA2B) from Cavia porcellus (Guinea pig).